The sequence spans 108 residues: Parvalbumin beta (108 aa).

Alanine 1 carries the post-translational modification N-acetylalanine. EF-hand domains follow at residues 38–73 (KSNEELEAIFKILDQDKSGFIEDEELELFLQNFSAG) and 77–108 (LTKTETETFLKAGDSDGDGKIGVDEFQKLVKA). Aspartate 51, aspartate 53, serine 55, phenylalanine 57, glutamate 59, glutamate 62, aspartate 90, aspartate 92, aspartate 94, lysine 96, and glutamate 101 together coordinate Ca(2+).

Belongs to the parvalbumin family.

Its function is as follows. In muscle, parvalbumin is thought to be involved in relaxation after contraction. It binds two calcium ions. In Latimeria chalumnae (Coelacanth), this protein is Parvalbumin beta.